The chain runs to 108 residues: UPF0145 protein ACIAD2946 (108 aa).

This sequence belongs to the UPF0145 family.

The sequence is that of UPF0145 protein ACIAD2946 from Acinetobacter baylyi (strain ATCC 33305 / BD413 / ADP1).